We begin with the raw amino-acid sequence, 173 residues long: Photosystem I assembly protein Ycf3 (173 aa).

3 TPR repeats span residues 35–68 (AYLY…EDNQ), 72–105 (GETL…NPKQ), and 120–153 (GRMA…YPGG).

Belongs to the Ycf3 family.

It localises to the cellular thylakoid membrane. In terms of biological role, essential for the assembly of the photosystem I (PSI) complex. May act as a chaperone-like factor to guide the assembly of the PSI subunits. The chain is Photosystem I assembly protein Ycf3 from Prochlorococcus marinus (strain NATL1A).